The following is a 540-amino-acid chain: 2,3-bisphosphoglycerate-independent phosphoglycerate mutase (540 aa).

Asp-13 and Ser-63 together coordinate Mn(2+). The active-site Phosphoserine intermediate is the Ser-63. Substrate-binding positions include His-124, 154 to 155 (RD), Arg-186, Arg-192, 262 to 265 (RPDR), and Lys-356. Mn(2+) is bound by residues Asp-423, His-427, Asp-464, His-465, and His-483.

Belongs to the BPG-independent phosphoglycerate mutase family. As to quaternary structure, monomer. It depends on Mn(2+) as a cofactor.

The catalysed reaction is (2R)-2-phosphoglycerate = (2R)-3-phosphoglycerate. It functions in the pathway carbohydrate degradation; glycolysis; pyruvate from D-glyceraldehyde 3-phosphate: step 3/5. Its function is as follows. Catalyzes the interconversion of 2-phosphoglycerate and 3-phosphoglycerate. The polypeptide is 2,3-bisphosphoglycerate-independent phosphoglycerate mutase (Chloroflexus aggregans (strain MD-66 / DSM 9485)).